The following is a 122-amino-acid chain: Large ribosomal subunit protein uL14c (122 aa).

The protein belongs to the universal ribosomal protein uL14 family. As to quaternary structure, part of the 50S ribosomal subunit.

It localises to the plastid. Its subcellular location is the chloroplast. Its function is as follows. Binds to 23S rRNA. This is Large ribosomal subunit protein uL14c from Vitis vinifera (Grape).